We begin with the raw amino-acid sequence, 224 residues long: MKLSLSPPPYADAPVVVLISGLGGSGSYWLPQLAVLEQEYQVVCYDQRGTGNNPDTLAEDYSIAQMAAELHQALVAAGIEHYAVVGHALGALVGMQLALDYPASVTVLVSVNGWLRINAHTRRCFQVRERLLYSGGAQAWVEAQPLFLYPADWMAARAPRLEAEDALALAHFQGKNNLLRRLNALKRADFSHHADRIRCPVQIICASDDLLVPSACSSELHAAL.

The 102-residue stretch at 14 to 115 (PVVVLISGLG…TVLVSVNGWL (102 aa)) folds into the AB hydrolase-1 domain.

Belongs to the AB hydrolase superfamily. Hydrolase RutD family.

The catalysed reaction is carbamate + 2 H(+) = NH4(+) + CO2. In terms of biological role, involved in pyrimidine catabolism. May facilitate the hydrolysis of carbamate, a reaction that can also occur spontaneously. The protein is Putative carbamate hydrolase RutD of Shigella dysenteriae serotype 1 (strain Sd197).